A 345-amino-acid chain; its full sequence is tRNA N6-adenosine threonylcarbamoyltransferase (345 aa).

The Fe cation site is built by His111 and His115. Residues 134-138, Asp167, Gly180, and Asn277 contribute to the substrate site; that span reads LVSGG. Residue Asp305 coordinates Fe cation.

Belongs to the KAE1 / TsaD family. It depends on Fe(2+) as a cofactor.

The protein localises to the cytoplasm. The catalysed reaction is L-threonylcarbamoyladenylate + adenosine(37) in tRNA = N(6)-L-threonylcarbamoyladenosine(37) in tRNA + AMP + H(+). Functionally, required for the formation of a threonylcarbamoyl group on adenosine at position 37 (t(6)A37) in tRNAs that read codons beginning with adenine. Is involved in the transfer of the threonylcarbamoyl moiety of threonylcarbamoyl-AMP (TC-AMP) to the N6 group of A37, together with TsaE and TsaB. TsaD likely plays a direct catalytic role in this reaction. The sequence is that of tRNA N6-adenosine threonylcarbamoyltransferase from Laribacter hongkongensis (strain HLHK9).